The following is a 663-amino-acid chain: DNA topoisomerase 4 subunit B (663 aa).

ATP contacts are provided by residues tyrosine 7, asparagine 47, aspartate 74, 114–120 (GLHGVGA), and lysine 341. The segment at 386 to 416 (REAARKAREDARSGKKNKRKDTLLSGKLTPA) is disordered. A compositionally biased stretch (basic and acidic residues) spans 387–398 (EAARKAREDARS). The Toprim domain maps to 424–538 (NELYLVEGDS…AGRVFIALPP (115 aa)). Residues glutamate 430, aspartate 503, and aspartate 505 each coordinate Mg(2+).

The protein belongs to the type II topoisomerase family. ParE type 2 subfamily. In terms of assembly, heterotetramer composed of ParC and ParE. Mg(2+) serves as cofactor. Requires Mn(2+) as cofactor. The cofactor is Ca(2+).

The enzyme catalyses ATP-dependent breakage, passage and rejoining of double-stranded DNA.. Topoisomerase IV is essential for chromosome segregation. It relaxes supercoiled DNA. Performs the decatenation events required during the replication of a circular DNA molecule. In Staphylococcus aureus (strain Mu50 / ATCC 700699), this protein is DNA topoisomerase 4 subunit B.